The chain runs to 235 residues: Thiamine-phosphate synthase (235 aa).

4-amino-2-methyl-5-(diphosphooxymethyl)pyrimidine-binding positions include 50 to 54 (QLRDK) and N91. Residues D92 and D111 each contribute to the Mg(2+) site. A 4-amino-2-methyl-5-(diphosphooxymethyl)pyrimidine-binding site is contributed by S130. 160–162 (TPT) serves as a coordination point for 2-[(2R,5Z)-2-carboxy-4-methylthiazol-5(2H)-ylidene]ethyl phosphate. K163 contacts 4-amino-2-methyl-5-(diphosphooxymethyl)pyrimidine. G191 contacts 2-[(2R,5Z)-2-carboxy-4-methylthiazol-5(2H)-ylidene]ethyl phosphate.

Belongs to the thiamine-phosphate synthase family. It depends on Mg(2+) as a cofactor.

It catalyses the reaction 2-[(2R,5Z)-2-carboxy-4-methylthiazol-5(2H)-ylidene]ethyl phosphate + 4-amino-2-methyl-5-(diphosphooxymethyl)pyrimidine + 2 H(+) = thiamine phosphate + CO2 + diphosphate. The enzyme catalyses 2-(2-carboxy-4-methylthiazol-5-yl)ethyl phosphate + 4-amino-2-methyl-5-(diphosphooxymethyl)pyrimidine + 2 H(+) = thiamine phosphate + CO2 + diphosphate. It carries out the reaction 4-methyl-5-(2-phosphooxyethyl)-thiazole + 4-amino-2-methyl-5-(diphosphooxymethyl)pyrimidine + H(+) = thiamine phosphate + diphosphate. It participates in cofactor biosynthesis; thiamine diphosphate biosynthesis; thiamine phosphate from 4-amino-2-methyl-5-diphosphomethylpyrimidine and 4-methyl-5-(2-phosphoethyl)-thiazole: step 1/1. Functionally, condenses 4-methyl-5-(beta-hydroxyethyl)thiazole monophosphate (THZ-P) and 2-methyl-4-amino-5-hydroxymethyl pyrimidine pyrophosphate (HMP-PP) to form thiamine monophosphate (TMP). This is Thiamine-phosphate synthase from Mycobacterium leprae (strain TN).